The following is a 101-amino-acid chain: Large ribosomal subunit protein bL28 (101 aa).

This sequence belongs to the bacterial ribosomal protein bL28 family.

This chain is Large ribosomal subunit protein bL28, found in Caulobacter sp. (strain K31).